The sequence spans 198 residues: MTNADNELEPRLITETGLDQRLADIIEPVLVGMGFRLIRVRMLNQNGATMQVMAERNDGTMTVQDCEEVSMAISPVLDVEDPIDKEYHLEVSSPGIDRPMVRKSDFVRWQGHLVKCETSIMIGNRKRFRGKIVEADADGFTLERDQVAYGEEQKVIIPFTALSDAKLILTDDLIRDALRADKLAKAQAANQNEADDQE.

Belongs to the RimP family.

Its subcellular location is the cytoplasm. Its function is as follows. Required for maturation of 30S ribosomal subunits. This chain is Ribosome maturation factor RimP, found in Rhizobium etli (strain ATCC 51251 / DSM 11541 / JCM 21823 / NBRC 15573 / CFN 42).